A 375-amino-acid polypeptide reads, in one-letter code: Terpene cyclase braA (375 aa).

Residues Asp-116, Asn-264, and Ser-268 each contribute to the Mg(2+) site. Positions 116–120 (DDEID) match the D(D/E)XX(D/E) motif motif. The NSE motif signature appears at 264-272 (NDVLSLQKE). The WxxxxxRY motif signature appears at 348 to 355 (WSYSCERY). Residues Arg-354 and Tyr-355 each coordinate (2E,6E)-farnesyl diphosphate.

It belongs to the terpene synthase family. In terms of assembly, homodimer. It depends on Mg(2+) as a cofactor.

The enzyme catalyses (2E,6E)-farnesyl diphosphate + H2O = trichobrasilenol + diphosphate. It functions in the pathway secondary metabolite biosynthesis. Terpene cyclase; part of the gene cluster that mediates the biosynthesis of the brasilane terpene glycosides brasilane D and E. The biosynthesis starts with the activity of the terpene cyclase braA that converts farnesyl pyrophosphate into the sesquiterpene alcohol trichobrasilenol. Subsequently, trichobrasilenol is glycosylated by the O-glycosyltransferase braB putatively using UDP-GlcNAc as sugar donor to yield brasilane A. The latter then undergoes two rounds of oxidation performed by the cytochrome P450 monooxygenase braC. In the first round braC hydroxylates C-12 forming brasilane D, which serves as substrate in the second round to establish the epoxide at the bond between C-5 and C-10 and oxidize the alcohol at C-12 to an aldehyde leading to the final product brasilane E. The chain is Terpene cyclase braA from Annulohypoxylon truncatum (Hypoxylon truncatum).